Consider the following 671-residue polypeptide: Putative protein kinase C delta type homolog (671 aa).

Residues 1–136 (MMFTRAQVRK…ITNRRGAIKH (136 aa)) form a disordered region. The span at 14–27 (SNSSSQRPRSSGGS) shows a compositional bias: low complexity. A compositionally biased stretch (basic and acidic residues) spans 57 to 101 (ARRDQYRDRDHYGKHSFELPRQHSKEEAYHRDRESSAGGVDRGER). A compositionally biased stretch (gly residues) spans 102-116 (SGIGGNGGGVTGGGV). 2 Phorbol-ester/DAG-type zinc fingers span residues 144-194 (GHRF…LGKC) and 216-266 (PHRF…ANLC). One can recognise a Protein kinase domain in the interval 343–601 (FHFLAVLGKG…AGDIADHIFF (259 aa)). Residues 349-357 (LGKGSFGKV) and Lys372 contribute to the ATP site. The Proton acceptor role is filled by Asp467. Positions 602–671 (RPIDWGLLEK…TYTNPHITLD (70 aa)) constitute an AGC-kinase C-terminal domain.

Belongs to the protein kinase superfamily. AGC Ser/Thr protein kinase family. PKC subfamily.

It carries out the reaction L-seryl-[protein] + ATP = O-phospho-L-seryl-[protein] + ADP + H(+). The catalysed reaction is L-threonyl-[protein] + ATP = O-phospho-L-threonyl-[protein] + ADP + H(+). The polypeptide is Putative protein kinase C delta type homolog (Drosophila melanogaster (Fruit fly)).